The sequence spans 370 residues: Flagellar P-ring protein (370 aa).

An N-terminal signal peptide occupies residues 1-24 (MTLSKWILSFGLSVCLIVSHPVSA).

This sequence belongs to the FlgI family. In terms of assembly, the basal body constitutes a major portion of the flagellar organelle and consists of four rings (L,P,S, and M) mounted on a central rod.

The protein localises to the periplasm. It localises to the bacterial flagellum basal body. Functionally, assembles around the rod to form the L-ring and probably protects the motor/basal body from shearing forces during rotation. The sequence is that of Flagellar P-ring protein from Nitrosomonas europaea (strain ATCC 19718 / CIP 103999 / KCTC 2705 / NBRC 14298).